We begin with the raw amino-acid sequence, 375 residues long: Protein RIC-3 (375 aa).

Positions 1-29 (MALSAVQKVVLFSCLVLCVSLLLPRAYIA) are cleaved as a signal peptide. Over 30 to 90 (RGKPAAQEGN…GGGGGTRPSL (61 aa)) the chain is Lumenal. Polar residues predominate over residues 38–47 (GNTGLFQSSG). Positions 38-63 (GNTGLFQSSGHHPKPTDGRPGGAHFP) are disordered. The helical transmembrane segment at 91–111 (VGQIIPIYGFGILLYILYILF) threads the bilayer. Residues 112-375 (KLSSKGKSTK…RKRNTKGIEY (264 aa)) lie on the Cytoplasmic side of the membrane. Positions 135–165 (KRKITDYELSQLQDKLKETEEAMEKIISRLG) form a coiled coil. Positions 251–375 (SAEQVAEQMG…RKRNTKGIEY (125 aa)) are disordered. Positions 286–296 (GDQQAQGTISA) are enriched in polar residues. Residues 305 to 319 (EDIEEDEDEDEDPEV) are compositionally biased toward acidic residues. A compositionally biased stretch (basic residues) spans 365–375 (LRKRNTKGIEY).

Belongs to the ric-3 family.

Its subcellular location is the endoplasmic reticulum membrane. Molecular chaperone which facilitates proper subunit assembly andsurface trafficking of alpha-7 (CHRNA7) and alpha-8 (CHRNA8) nicotinic acetylcholine receptors. May also promote functional expression of homomeric serotoninergic 5-HT3 receptors, and of heteromeric acetylcholine receptors. The chain is Protein RIC-3 (ric3) from Xenopus tropicalis (Western clawed frog).